Reading from the N-terminus, the 489-residue chain is N-succinylglutamate 5-semialdehyde dehydrogenase (489 aa).

221–226 (GSSGTG) contributes to the NAD(+) binding site. Residues Glu244 and Cys278 contribute to the active site.

Belongs to the aldehyde dehydrogenase family. AstD subfamily.

The enzyme catalyses N-succinyl-L-glutamate 5-semialdehyde + NAD(+) + H2O = N-succinyl-L-glutamate + NADH + 2 H(+). It functions in the pathway amino-acid degradation; L-arginine degradation via AST pathway; L-glutamate and succinate from L-arginine: step 4/5. Functionally, catalyzes the NAD-dependent reduction of succinylglutamate semialdehyde into succinylglutamate. This chain is N-succinylglutamate 5-semialdehyde dehydrogenase, found in Sorangium cellulosum (strain So ce56) (Polyangium cellulosum (strain So ce56)).